The chain runs to 219 residues: Deoxyribose-phosphate aldolase (219 aa).

The active-site Proton donor/acceptor is Asp89. The active-site Schiff-base intermediate with acetaldehyde is the Lys151. The Proton donor/acceptor role is filled by Lys180.

The protein belongs to the DeoC/FbaB aldolase family. DeoC type 1 subfamily.

The protein resides in the cytoplasm. The catalysed reaction is 2-deoxy-D-ribose 5-phosphate = D-glyceraldehyde 3-phosphate + acetaldehyde. It functions in the pathway carbohydrate degradation; 2-deoxy-D-ribose 1-phosphate degradation; D-glyceraldehyde 3-phosphate and acetaldehyde from 2-deoxy-alpha-D-ribose 1-phosphate: step 2/2. Its function is as follows. Catalyzes a reversible aldol reaction between acetaldehyde and D-glyceraldehyde 3-phosphate to generate 2-deoxy-D-ribose 5-phosphate. This Clostridioides difficile (strain 630) (Peptoclostridium difficile) protein is Deoxyribose-phosphate aldolase.